A 459-amino-acid polypeptide reads, in one-letter code: Cobyrinate a,c-diamide synthase (459 aa).

The region spanning 249–446 (RIGMAFDEAF…VHTHFASRPG (198 aa)) is the GATase cobBQ-type domain. The active-site Nucleophile is the cysteine 332.

Belongs to the CobB/CbiA family. It depends on Mg(2+) as a cofactor.

It catalyses the reaction cob(II)yrinate + 2 L-glutamine + 2 ATP + 2 H2O = cob(II)yrinate a,c diamide + 2 L-glutamate + 2 ADP + 2 phosphate + 2 H(+). It functions in the pathway cofactor biosynthesis; adenosylcobalamin biosynthesis; cob(II)yrinate a,c-diamide from sirohydrochlorin (anaerobic route): step 10/10. Catalyzes the ATP-dependent amidation of the two carboxylate groups at positions a and c of cobyrinate, using either L-glutamine or ammonia as the nitrogen source. The chain is Cobyrinate a,c-diamide synthase from Syntrophotalea carbinolica (strain DSM 2380 / NBRC 103641 / GraBd1) (Pelobacter carbinolicus).